Consider the following 698-residue polypeptide: Glycine--tRNA ligase beta subunit (698 aa).

The protein belongs to the class-II aminoacyl-tRNA synthetase family. As to quaternary structure, tetramer of two alpha and two beta subunits.

Its subcellular location is the cytoplasm. The enzyme catalyses tRNA(Gly) + glycine + ATP = glycyl-tRNA(Gly) + AMP + diphosphate. The polypeptide is Glycine--tRNA ligase beta subunit (Xanthomonas campestris pv. campestris (strain 8004)).